Consider the following 208-residue polypeptide: Protein GrpE (208 aa).

Over residues 1-12 the composition is skewed to basic and acidic residues; it reads MTNKDESVKKNT. Residues 1 to 51 form a disordered region; sequence MTNKDESVKKNTESTVEETNVKQNIDDSVEQAEESKGHLQDEAIEETSDEN. Polar residues predominate over residues 13-23; sequence ESTVEETNVKQ. Acidic residues predominate over residues 42-51; the sequence is EAIEETSDEN.

The protein belongs to the GrpE family. As to quaternary structure, homodimer.

It localises to the cytoplasm. In terms of biological role, participates actively in the response to hyperosmotic and heat shock by preventing the aggregation of stress-denatured proteins, in association with DnaK and GrpE. It is the nucleotide exchange factor for DnaK and may function as a thermosensor. Unfolded proteins bind initially to DnaJ; upon interaction with the DnaJ-bound protein, DnaK hydrolyzes its bound ATP, resulting in the formation of a stable complex. GrpE releases ADP from DnaK; ATP binding to DnaK triggers the release of the substrate protein, thus completing the reaction cycle. Several rounds of ATP-dependent interactions between DnaJ, DnaK and GrpE are required for fully efficient folding. The polypeptide is Protein GrpE (Staphylococcus aureus (strain COL)).